The primary structure comprises 202 residues: uncharacterized protein (202 aa).

K136 participates in a covalent cross-link: Isoglutamyl lysine isopeptide (Lys-Gln) (interchain with Q-Cter in protein Pup).

This is an uncharacterized protein from Mycobacterium tuberculosis (strain CDC 1551 / Oshkosh).